The following is a 251-amino-acid chain: MGKLLLILGSAIALPSFAAAGGDLDISDTVGVSFWLVTAGMLAATVFFFVERDQVSAKWKTSLTVSGLITGIAFWHYLYMRGVWIDTGDTPTVFRYIDWLLTVPLQVVEFYLILAACTSVAASLFKKLLAGSLVMLGAGFAGEAGLAPVLPAFIIGMAGWLYMIYELYMGEGKAAVSTASPAVNSAYNAMMMIIVVGWAIYPAGYAAGYLMGGEGVYASNLNLIYNLADFVNKILFGLIIWNVAVKESSNA.

Residues 1 to 18 (MGKLLLILGSAIALPSFA) form the signal peptide. The next 7 helical transmembrane spans lie at 30–50 (VGVS…FFFV), 65–85 (VSGL…GVWI), 97–117 (IDWL…LAAC), 120–140 (VAAS…GAGF), 144–164 (AGLA…LYMI), 190–210 (MMMI…AGYL), and 223–243 (LIYN…IWNV). N6-(retinylidene)lysine is present on lysine 233.

The protein belongs to the archaeal/bacterial/fungal opsin family. In terms of processing, contains one covalently linked retinal chromophore.

It localises to the cell membrane. In terms of biological role, light-driven proton pump. May have a regulatory rather than energy harvesting function, based on light-induced opening of proton channels, to modulate cell physiology depending on light intensity variations. Could be, therefore, a sensory rhodopsin, potentially associated with a transducer component. The polypeptide is Blue-light absorbing proteorhodopsin (Gamma-proteobacterium Hot 75m4).